A 329-amino-acid chain; its full sequence is Nuclear pore complex protein NUP35 (329 aa).

Disordered regions lie at residues 48 to 105 and 123 to 167; these read NFGG…GKGK and VSGS…PPRE. The span at 123–139 shows a compositional bias: polar residues; sequence VSGSPSWWSQSKAGSST. An RRM Nup35-type domain is found at 183–264; it reads LDEEEWVTVY…KPVDPIQKQA (82 aa). A disordered region spans residues 271 to 315; sequence NQGFMPLPPPSSTRNTARPLSRPQYLQNGSAFSPQPSGGAMASPS. Over residues 282–306 the composition is skewed to polar residues; the sequence is STRNTARPLSRPQYLQNGSAFSPQP.

It belongs to the Nup35 family. As to quaternary structure, part of the nuclear pore complex (NPC). The NPC has an eight-fold symmetrical structure comprising a central transport channel and two rings, the cytoplasmic and nuclear rings, to which eight filaments are attached. The cytoplasmic filaments have loose ends, while the nuclear filaments are joined in a distal ring, forming a nuclear basket. NPCs are highly dynamic in configuration and composition, and can be devided in 3 subcomplexes, the NUP62 subcomplex, the NUP107-160 subcomplex and the NUP93 subcomplex, containing approximately 30 different nucleoporin proteins.

The protein resides in the nucleus. The protein localises to the nuclear pore complex. The polypeptide is Nuclear pore complex protein NUP35 (Arabidopsis thaliana (Mouse-ear cress)).